We begin with the raw amino-acid sequence, 121 residues long: Fluoride-specific ion channel FluC 1 (121 aa).

The next 4 helical transmembrane spans lie at 3-23 (YVYIFIGGALGALLRYLISFL), 35-55 (VANLTGAFIMGLLTALTIAFF), 64-84 (AITTGFLGALTTFSTFQLELI), and 92-112 (FITLLLYAITSYVFGILLCYV). 2 residues coordinate Na(+): G71 and T74.

This sequence belongs to the fluoride channel Fluc/FEX (TC 1.A.43) family.

It localises to the cell membrane. The catalysed reaction is fluoride(in) = fluoride(out). Na(+) is not transported, but it plays an essential structural role and its presence is essential for fluoride channel function. Functionally, fluoride-specific ion channel. Important for reducing fluoride concentration in the cell, thus reducing its toxicity. This Staphylococcus aureus (strain bovine RF122 / ET3-1) protein is Fluoride-specific ion channel FluC 1.